The primary structure comprises 183 residues: Ribosome-recycling factor (183 aa).

The protein belongs to the RRF family.

It is found in the cytoplasm. Its function is as follows. Responsible for the release of ribosomes from messenger RNA at the termination of protein biosynthesis. May increase the efficiency of translation by recycling ribosomes from one round of translation to another. The protein is Ribosome-recycling factor of Afipia carboxidovorans (strain ATCC 49405 / DSM 1227 / KCTC 32145 / OM5) (Oligotropha carboxidovorans).